Here is a 264-residue protein sequence, read N- to C-terminus: MEMO1 family protein Mbur_2394 (264 aa).

The protein belongs to the MEMO1 family.

This is MEMO1 family protein Mbur_2394 from Methanococcoides burtonii (strain DSM 6242 / NBRC 107633 / OCM 468 / ACE-M).